The sequence spans 505 residues: Probable cytosol aminopeptidase (505 aa).

Positions 269 and 274 each coordinate Mn(2+). Lys281 is an active-site residue. The Mn(2+) site is built by Asp292, Asp351, and Glu353. Residue Arg355 is part of the active site.

It belongs to the peptidase M17 family. Mn(2+) serves as cofactor.

It is found in the cytoplasm. The enzyme catalyses Release of an N-terminal amino acid, Xaa-|-Yaa-, in which Xaa is preferably Leu, but may be other amino acids including Pro although not Arg or Lys, and Yaa may be Pro. Amino acid amides and methyl esters are also readily hydrolyzed, but rates on arylamides are exceedingly low.. The catalysed reaction is Release of an N-terminal amino acid, preferentially leucine, but not glutamic or aspartic acids.. Functionally, presumably involved in the processing and regular turnover of intracellular proteins. Catalyzes the removal of unsubstituted N-terminal amino acids from various peptides. The protein is Probable cytosol aminopeptidase of Rhodococcus erythropolis (strain PR4 / NBRC 100887).